The following is a 493-amino-acid chain: Ribose import ATP-binding protein RbsA (493 aa).

2 ABC transporter domains span residues 3 to 239 and 252 to 493; these read IKMK…VGRE and GRVV…TGGR. 35–42 is a binding site for ATP; the sequence is GENGAGKS.

This sequence belongs to the ABC transporter superfamily. Ribose importer (TC 3.A.1.2.1) family. The complex is composed of an ATP-binding protein (RbsA), two transmembrane proteins (RbsC) and a solute-binding protein (RbsB).

Its subcellular location is the cell membrane. The enzyme catalyses D-ribose(out) + ATP + H2O = D-ribose(in) + ADP + phosphate + H(+). In terms of biological role, part of the ABC transporter complex RbsABC involved in ribose import. Responsible for energy coupling to the transport system. The chain is Ribose import ATP-binding protein RbsA from Bacillus licheniformis (strain ATCC 14580 / DSM 13 / JCM 2505 / CCUG 7422 / NBRC 12200 / NCIMB 9375 / NCTC 10341 / NRRL NRS-1264 / Gibson 46).